Consider the following 316-residue polypeptide: ATP synthase gamma chain (316 aa).

It belongs to the ATPase gamma chain family. F-type ATPases have 2 components, CF(1) - the catalytic core - and CF(0) - the membrane proton channel. CF(1) has five subunits: alpha(3), beta(3), gamma(1), delta(1), epsilon(1). CF(0) has three main subunits: a, b and c.

Its subcellular location is the cellular thylakoid membrane. Produces ATP from ADP in the presence of a proton gradient across the membrane. The gamma chain is believed to be important in regulating ATPase activity and the flow of protons through the CF(0) complex. The sequence is that of ATP synthase gamma chain from Synechococcus sp. (strain CC9605).